The sequence spans 127 residues: Small ribosomal subunit protein uS13 (127 aa).

Residues 97 to 127 form a disordered region; the sequence is PVRGQRTRTNARTRRGGRKTVAGKKKAAAKK. Positions 101-127 are enriched in basic residues; that stretch reads QRTRTNARTRRGGRKTVAGKKKAAAKK.

This sequence belongs to the universal ribosomal protein uS13 family. In terms of assembly, part of the 30S ribosomal subunit. Forms a loose heterodimer with protein S19. Forms two bridges to the 50S subunit in the 70S ribosome.

Located at the top of the head of the 30S subunit, it contacts several helices of the 16S rRNA. In the 70S ribosome it contacts the 23S rRNA (bridge B1a) and protein L5 of the 50S subunit (bridge B1b), connecting the 2 subunits; these bridges are implicated in subunit movement. Contacts the tRNAs in the A and P-sites. This is Small ribosomal subunit protein uS13 from Gloeobacter violaceus (strain ATCC 29082 / PCC 7421).